The primary structure comprises 268 residues: tRNA pseudouridine synthase A (268 aa).

Asp-52 functions as the Nucleophile in the catalytic mechanism. Residue Tyr-110 participates in substrate binding.

The protein belongs to the tRNA pseudouridine synthase TruA family. As to quaternary structure, homodimer.

It carries out the reaction uridine(38/39/40) in tRNA = pseudouridine(38/39/40) in tRNA. Its function is as follows. Formation of pseudouridine at positions 38, 39 and 40 in the anticodon stem and loop of transfer RNAs. This is tRNA pseudouridine synthase A from Prochlorococcus marinus subsp. pastoris (strain CCMP1986 / NIES-2087 / MED4).